Here is a 132-residue protein sequence, read N- to C-terminus: MSIITDPIADMLTRIKNATKRKHKSVNIPFSNKKLKIVEIIKKEGYISGYEIVGQGIEKKILITLKYKGNTSAIFDLKRISKPGLRVYTTASNIPSVLSGYGIAIISTSKGILTDKEARKENVGGEVIAYIW.

It belongs to the universal ribosomal protein uS8 family. In terms of assembly, part of the 30S ribosomal subunit. Contacts proteins S5 and S12.

One of the primary rRNA binding proteins, it binds directly to 16S rRNA central domain where it helps coordinate assembly of the platform of the 30S subunit. The sequence is that of Small ribosomal subunit protein uS8 from Mycoplasmopsis pulmonis (strain UAB CTIP) (Mycoplasma pulmonis).